We begin with the raw amino-acid sequence, 91 residues long: Small ribosomal subunit protein bS20 (91 aa).

The interval 1–23 (MANTPSAKKRAKQAEKRRSHNAS) is disordered. The span at 7–20 (AKKRAKQAEKRRSH) shows a compositional bias: basic residues.

Belongs to the bacterial ribosomal protein bS20 family.

Binds directly to 16S ribosomal RNA. The sequence is that of Small ribosomal subunit protein bS20 from Pseudomonas paraeruginosa (strain DSM 24068 / PA7) (Pseudomonas aeruginosa (strain PA7)).